The following is a 95-amino-acid chain: Co-chaperonin GroES (95 aa).

It belongs to the GroES chaperonin family. In terms of assembly, heptamer of 7 subunits arranged in a ring. Interacts with the chaperonin GroEL.

It localises to the cytoplasm. Its function is as follows. Together with the chaperonin GroEL, plays an essential role in assisting protein folding. The GroEL-GroES system forms a nano-cage that allows encapsulation of the non-native substrate proteins and provides a physical environment optimized to promote and accelerate protein folding. GroES binds to the apical surface of the GroEL ring, thereby capping the opening of the GroEL channel. This chain is Co-chaperonin GroES, found in Pseudoalteromonas translucida (strain TAC 125).